Consider the following 338-residue polypeptide: Acyl-CoA-binding domain-containing protein 1 (338 aa).

Residues Ile-11–Phe-31 form a helical; Signal-anchor membrane-spanning segment. Asn-35 and Asn-41 each carry an N-linked (GlcNAc...) asparagine glycan. Positions Ala-69–Val-89 are disordered. A compositionally biased stretch (acidic residues) spans Asp-77 to Val-89. Residues Leu-94–Glu-184 form the ACB domain. An acyl-CoA contacts are provided by residues Tyr-126 to Lys-130, Lys-152, and Tyr-171. The N-linked (GlcNAc...) asparagine glycan is linked to Asn-191. ANK repeat units follow at residues Leu-217–Ala-246, Glu-250–Ala-279, Glu-283–Ile-312, and Asp-316–Asn-338.

This sequence belongs to the ACBP family. In terms of assembly, interacts with RAP2-12. Binds to SMO1-1 and SMO1-2. Post-translationally, glycosylated. In seeds, localized in the outer integument. Expressed at low levels in roots, stems, leaves, flowers, and siliques, especially within seeds.

It localises to the cell membrane. It is found in the secreted. The protein resides in the cell wall. The protein localises to the endoplasmic reticulum membrane. Its function is as follows. Binds medium- and long-chain acyl-CoA esters with very high affinity. Can interact in vitro with arachidonyl-CoA, barely with oleoyl-CoA, but not with palmitoyl-CoA. Confers tolerance and binds to lead ions Pb(2+), probably by promoting lead translocation from roots to shoots. May function as an intracellular carrier of acyl-CoA esters. Modulates negatively sterol synthesis during embryogenesis and gametophytes development via interactions with SMO1-1 and SMO1-2; sterols serve as lipid modulators for gene expression of homeodomain-leucine zipper IV transcription factors. This Arabidopsis thaliana (Mouse-ear cress) protein is Acyl-CoA-binding domain-containing protein 1.